The chain runs to 209 residues: Probable GTP-binding protein EngB (209 aa).

Residues 22 to 198 (TPLEIAFVGR…NRTVGSWFDA (177 aa)) form the EngB-type G domain. Residues Ser-37 and Thr-59 each contribute to the Mg(2+) site.

It belongs to the TRAFAC class TrmE-Era-EngA-EngB-Septin-like GTPase superfamily. EngB GTPase family. The cofactor is Mg(2+).

Its function is as follows. Necessary for normal cell division and for the maintenance of normal septation. The chain is Probable GTP-binding protein EngB from Neisseria gonorrhoeae (strain ATCC 700825 / FA 1090).